The primary structure comprises 270 residues: Zinc transporter ZupT (270 aa).

8 helical membrane passes run isoleucine 8 to isoleucine 28, leucine 40 to leucine 60, tryptophan 78 to valine 98, isoleucine 131 to alanine 151, isoleucine 162 to tyrosine 182, leucine 192 to phenylalanine 212, phenylalanine 216 to isoleucine 236, and histidine 250 to isoleucine 270. Positions 141 and 144 each coordinate Fe(2+). Residues glutamate 144 and histidine 169 each contribute to the Zn(2+) site. The Fe(2+) site is built by asparagine 170, glutamate 173, and glutamate 202. Position 173 (glutamate 173) interacts with Zn(2+).

It belongs to the ZIP transporter (TC 2.A.5) family. ZupT subfamily.

It localises to the cell membrane. It catalyses the reaction Zn(2+)(in) = Zn(2+)(out). Its function is as follows. Mediates zinc uptake. May also transport other divalent cations. This is Zinc transporter ZupT from Akkermansia muciniphila (strain ATCC BAA-835 / DSM 22959 / JCM 33894 / BCRC 81048 / CCUG 64013 / CIP 107961 / Muc).